The sequence spans 559 residues: MEYDYIIIGAGSAGNVLATRLTEESDVSVLLLEAGGPDYRLDFRTQMPAALAFPLQGKRYNWAYETDPEPHMNNRRMECGRGKGLGGSSLINGMCYIRGNAMDFDNWATMPGLEDWSYLDCLPYFRKAETRDVGSNDYHGATGPVSVATPKMGNNELFHAMVEAGVQAGYPRTDDLNGYQQEGFGPMDRTVTPKGRRASTARGYLDQAKGRKNLTIVTHALTDKILFEGKRAVGVAYFKGESPQTVQARREVLLCAGAIASPQILQRSGVGPKDLLQGLDIPVVHDLPGVGENLQDHLEMYLQYACKEPVSLYPALQWFNQPKIGAEWLFSGTGIGASNQFEAGGFIRSRDEFAWPNIQYHFLPVAINYNGSNAVKEHGFQAHVGSMRSLSRGRVQVRSKDAREHPSILFNYMSTEQDWQEFRDAIRITREIMAQPALDKYRGREISPGLEVQTDEELDEFIRTHAETAFHPSCSCKMGEDEMAVVDGQGRVHGMEGLRVVDASIMPQIITGNLNATTIMIAEKIADRIRRRQPLPRSRARYYVSGNTPVRKAPLKPAS.

An FAD-binding site is contributed by 4–33 (DYIIIGAGSAGNVLATRLTEESDVSVLLLE). Residues 182–201 (EGFGPMDRTVTPKGRRASTA) form a disordered region. His471 serves as the catalytic Proton acceptor.

Belongs to the GMC oxidoreductase family. It depends on FAD as a cofactor.

It carries out the reaction choline + A = betaine aldehyde + AH2. The enzyme catalyses betaine aldehyde + NAD(+) + H2O = glycine betaine + NADH + 2 H(+). Its pathway is amine and polyamine biosynthesis; betaine biosynthesis via choline pathway; betaine aldehyde from choline (cytochrome c reductase route): step 1/1. In terms of biological role, involved in the biosynthesis of the osmoprotectant glycine betaine. Catalyzes the oxidation of choline to betaine aldehyde and betaine aldehyde to glycine betaine at the same rate. This is Oxygen-dependent choline dehydrogenase from Pectobacterium carotovorum subsp. carotovorum (strain PC1).